Consider the following 1488-residue polypeptide: Chromosome partition protein MukB (1488 aa).

34-41 (GGNGAGKS) serves as a coordination point for ATP. Coiled coils occupy residues 326-418 (LEAD…QYNQ), 444-472 (LDTF…QTAH), and 509-602 (RHLA…QRAP). Residues 666–783 (PGGAEDQRLN…SLPIFGRAAR (118 aa)) are flexible hinge. Coiled coils occupy residues 835–923 (EAEI…AKLE), 977–1116 (EMLS…AKAG), and 1209–1265 (VEAI…LQSV). The tract at residues 1049-1074 (ADSGAEERARQRRDELHAQLSNNRSR) is disordered. Basic and acidic residues predominate over residues 1051–1065 (SGAEERARQRRDELH).

Belongs to the SMC family. MukB subfamily. Homodimerization via its hinge domain. Binds to DNA via its C-terminal region. Interacts, and probably forms a ternary complex, with MukE and MukF via its C-terminal region. The complex formation is stimulated by calcium or magnesium. Interacts with tubulin-related protein FtsZ.

Its subcellular location is the cytoplasm. It localises to the nucleoid. Its function is as follows. Plays a central role in chromosome condensation, segregation and cell cycle progression. Functions as a homodimer, which is essential for chromosome partition. Involved in negative DNA supercoiling in vivo, and by this means organize and compact chromosomes. May achieve or facilitate chromosome segregation by condensation DNA from both sides of a centrally located replisome during cell division. This is Chromosome partition protein MukB from Salmonella enteritidis PT4 (strain P125109).